Reading from the N-terminus, the 523-residue chain is Peptide chain release factor 3 (523 aa).

The tr-type G domain occupies 10 to 277; that stretch reads NKRRTFAIIS…QFVDLAPAPG (268 aa). GTP-binding positions include 19 to 26, 87 to 91, and 141 to 144; these read SHPDAGKT, DTPGH, and NKLD.

The protein belongs to the TRAFAC class translation factor GTPase superfamily. Classic translation factor GTPase family. PrfC subfamily.

It localises to the cytoplasm. Increases the formation of ribosomal termination complexes and stimulates activities of RF-1 and RF-2. It binds guanine nucleotides and has strong preference for UGA stop codons. It may interact directly with the ribosome. The stimulation of RF-1 and RF-2 is significantly reduced by GTP and GDP, but not by GMP. This chain is Peptide chain release factor 3, found in Lactobacillus delbrueckii subsp. bulgaricus (strain ATCC BAA-365 / Lb-18).